We begin with the raw amino-acid sequence, 23 residues long: Mu-conotoxin-like SxIIIB (23 aa).

Gln1 carries the pyrrolidone carboxylic acid modification. Cystine bridges form between Cys3/Cys16, Cys4/Cys21, and Cys11/Cys22. Alanine amide is present on Ala23.

The protein belongs to the conotoxin M superfamily. Expressed by the venom duct.

The protein localises to the secreted. Mu-conotoxins block voltage-gated sodium channels (Nav). This is Mu-conotoxin-like SxIIIB from Conus striolatus (Cone snail).